The chain runs to 399 residues: MATTLATDVRLSIAHQTRFALRLASTISSNPKSAASNAAFSPVSLHSALSLLAAGAGSATRDQLVATLGTGEVEGGHALAEQVVQFVLADASSAGGPRVAFANGVFVDASLLLKPSFQELAVCKYKAETQSVDFQTKAAEVTTQVNSWVEKVTSGRIKNILPSGSVDNTTKLVLANALYFKGAWTDQFDSYGTKNDYFYLLDGSSVQTPFMSSMDDDQYISSSDGLKVLKLPYKQGGDNRQFSMYILLPEAPGGLSSLAEKLSAEPDFLERHIPRQRVAIRQFKLPKFKISFGMEASDLLKCLGLQLPFSDEADFSEMVDSPMPQGLRVSSVFHQAFVEVNEQGTEAAASTAIKMVPQQARPPSVMDFIADHPFLFLLREDISGVVLFMGHVVNPLLSS.

The segment at 344–368 (GTEAAASTAIKMVPQQARPPSVMDF) is RCL.

This sequence belongs to the serpin family.

Its function is as follows. Inhibits chymotrypsin and cathepsin G in vitro. The chain is Serpin-Z1B from Triticum aestivum (Wheat).